Here is a 407-residue protein sequence, read N- to C-terminus: Arylacetamide deacetylase-like 3 (407 aa).

Residues 119–121 (HGG) carry the Involved in the stabilization of the negatively charged intermediate by the formation of the oxyanion hole motif. Active-site residues include Ser193, Asp347, and His377.

This sequence belongs to the 'GDXG' lipolytic enzyme family.

This Homo sapiens (Human) protein is Arylacetamide deacetylase-like 3 (AADACL3).